The primary structure comprises 214 residues: STS14 protein (214 aa).

An N-terminal signal peptide occupies residues 1 to 19; it reads MFVLSTAMACLVYIYIYIY. 3 consecutive repeat copies span residues 13–14, 15–16, and 17–18. The interval 13–18 is 3 X 2 AA tandem repeats of Y-I; sequence YIYIYI. Residues 80–200 form the SCP domain; sequence LDAHNKARSE…YEGPATLTVC (121 aa).

Belongs to the CRISP family. As to expression, highly expressed in the stigma and stylar cortex throughout pistil development. Not expressed in other organs.

Functionally, may protect the outer tissues of the pistil from pathogen attack. This chain is STS14 protein (STS14), found in Solanum tuberosum (Potato).